The chain runs to 54 residues: Secreted virulence factor MC69 (54 aa).

The N-terminal stretch at 1–18 is a signal peptide; the sequence is MKFTLALLTTLCASLASA. A disulfide bridge links Cys-38 with Cys-48.

It belongs to the MC69 virulence factor family.

The protein localises to the secreted. Its function is as follows. Secreted protein required for appressorial penetration of intact host epidermal cells and for pathogenicity. This is Secreted virulence factor MC69 from Colletotrichum orbiculare (strain 104-T / ATCC 96160 / CBS 514.97 / LARS 414 / MAFF 240422) (Cucumber anthracnose fungus).